We begin with the raw amino-acid sequence, 950 residues long: Glycine dehydrogenase (decarboxylating) (950 aa).

Lys-698 bears the N6-(pyridoxal phosphate)lysine mark.

Belongs to the GcvP family. The glycine cleavage system is composed of four proteins: P, T, L and H. Pyridoxal 5'-phosphate is required as a cofactor.

The enzyme catalyses N(6)-[(R)-lipoyl]-L-lysyl-[glycine-cleavage complex H protein] + glycine + H(+) = N(6)-[(R)-S(8)-aminomethyldihydrolipoyl]-L-lysyl-[glycine-cleavage complex H protein] + CO2. In terms of biological role, the glycine cleavage system catalyzes the degradation of glycine. The P protein binds the alpha-amino group of glycine through its pyridoxal phosphate cofactor; CO(2) is released and the remaining methylamine moiety is then transferred to the lipoamide cofactor of the H protein. The sequence is that of Glycine dehydrogenase (decarboxylating) from Neisseria gonorrhoeae (strain ATCC 700825 / FA 1090).